Reading from the N-terminus, the 84-residue chain is MANSNNFSKTNAQQVRKQNQQSAAGQGQFGTEFASETNAQQVRKQNQQSAGQQGQFGTEFASETDAQQVRQQNQSAEQNKQQNS.

Composition is skewed to polar residues over residues 1–25 (MANSNNFSKTNAQQVRKQNQQSAAG) and 34–44 (ASETNAQQVRK). Residues 1–84 (MANSNNFSKT…SAEQNKQQNS (84 aa)) form a disordered region. Repeats lie at residues 21-47 (QSAAGQGQFGTEFASETNAQQVRKQNQ) and 48-74 (QSAGQQGQFGTEFASETDAQQVRQQNQ). 2 stretches are compositionally biased toward low complexity: residues 45-57 (QNQQSAGQQGQFG) and 71-84 (QQNQSAEQNKQQNS).

Belongs to the gamma-type SASP family.

In terms of biological role, SASP are proteins degraded in the first minutes of spore germination and provide amino acids for both new protein synthesis and metabolism. These proteins may be involved in dormant spore's high resistance to UV light. The protein is Small, acid-soluble spore protein gamma-type (sspE) of Bacillus subtilis (strain 168).